Reading from the N-terminus, the 102-residue chain is ATP-dependent Clp protease adapter protein ClpS (102 aa).

This sequence belongs to the ClpS family. Binds to the N-terminal domain of the chaperone ClpA.

In terms of biological role, involved in the modulation of the specificity of the ClpAP-mediated ATP-dependent protein degradation. The polypeptide is ATP-dependent Clp protease adapter protein ClpS (Wolinella succinogenes (strain ATCC 29543 / DSM 1740 / CCUG 13145 / JCM 31913 / LMG 7466 / NCTC 11488 / FDC 602W) (Vibrio succinogenes)).